Reading from the N-terminus, the 73-residue chain is UPF0154 protein MYCGA5700 (73 aa).

A helical membrane pass occupies residues 5 to 25 (LALGLSIPLCLIVGAFVGYFV).

This sequence belongs to the UPF0154 family.

The protein localises to the membrane. The protein is UPF0154 protein MYCGA5700 of Mycoplasmoides gallisepticum (strain R(low / passage 15 / clone 2)) (Mycoplasma gallisepticum).